The chain runs to 46 residues: Toxin Up-1 (46 aa).

Its subcellular location is the secreted. The protein resides in the nematocyst. It localises to the target cell membrane. Functionally, this toxin is a potent hemolysin devoid of enzymatic activity. Its hemolytic activity is inhibited by sphingomyelin but not by cholesterol. In erythrocyte membranes, it causes numerous cell membrane ruptures. It also exerces cytotoxicity to different cell lines. It exerces a positive inotropic effect. Also causes hemorrhage and necrosis by dilation of the blood vessels in the skin, and vascular leakage of fluids and rupture of alveolar walls of the lungs. Is a potent ichtyotoxin. May act as a pore-forming toxin. The sequence is that of Toxin Up-1 from Urticina piscivora (Fish-eating sea anemone).